The following is a 133-amino-acid chain: Basic leucine zipper transcriptional factor ATF-like 3 (133 aa).

The disordered stretch occupies residues 1–68; sequence MSQGPPAGGV…EHESLEQENS (68 aa). A phosphoserine mark is found at Ser2 and Ser24. A compositionally biased stretch (polar residues) spans 11 to 24; that stretch reads LQSSVAAPGNQPQS. One can recognise a bZIP domain in the interval 28–91; sequence DDRKVRRREK…RHLTEALKEH (64 aa). A basic motif region spans residues 30–55; the sequence is RKVRRREKNRVAAQRSRKKQTQKSDK. Residues 51–68 are compositionally biased toward basic and acidic residues; it reads QKSDKLHEEHESLEQENS. A leucine-zipper region spans residues 56–84; the sequence is LHEEHESLEQENSVLRREIAKLKEELRHL.

This sequence belongs to the bZIP family. In terms of assembly, heterodimer; heterodimerizes with JUN family proteins. Interacts with JUN. As to expression, ubiquitously expressed.

The protein resides in the nucleus. In terms of biological role, AP-1 family transcription factor that controls the differentiation of CD8(+) thymic conventional dendritic cells in the immune system. Acts via the formation of a heterodimer with JUN family proteins that recognizes and binds DNA sequence 5'-TGA[CG]TCA-3' and regulates expression of target genes. Required for development of CD8-alpha(+) classical dendritic cells (cDCs) and related CD103(+) dendritic cells that cross-present antigens to CD8 T-cells and produce interleukin-12 (IL12) in response to pathogens. The polypeptide is Basic leucine zipper transcriptional factor ATF-like 3 (Batf3) (Rattus norvegicus (Rat)).